The chain runs to 250 residues: Probable transcriptional regulatory protein ckrop_1032 (250 aa).

The segment at 1–22 (MSGHSKWATTKHKKAANDAKRG) is disordered.

It belongs to the TACO1 family.

Its subcellular location is the cytoplasm. This Corynebacterium kroppenstedtii (strain DSM 44385 / JCM 11950 / CIP 105744 / CCUG 35717) protein is Probable transcriptional regulatory protein ckrop_1032.